A 155-amino-acid polypeptide reads, in one-letter code: MKTYSAKPSEIEKKWWVIDAKNIVLGRLASRVANMLRGKHKPSFTPHLDCGDNIIIINAEHVNLTGKKANPKDGKIYYRYTGFPGGIKDTTAGKILSGKHPERVIKMAVKRMITRNALGAKQMSNLYVYANGDHPHMAQQPTVYDFASQNPKNKK.

It belongs to the universal ribosomal protein uL13 family. Part of the 50S ribosomal subunit.

Functionally, this protein is one of the early assembly proteins of the 50S ribosomal subunit, although it is not seen to bind rRNA by itself. It is important during the early stages of 50S assembly. In Rickettsia rickettsii (strain Iowa), this protein is Large ribosomal subunit protein uL13.